Reading from the N-terminus, the 388-residue chain is MKAMILAAGKGTRVRPITHTIPKPMIPILQKPVMEFLLELLRQHGFDQIMVNVSHLAEEIESYFRDGQRFGVQIAYSFEGNIVDGDLVGKALGSAGGLKKIQEFNPFFDDTFVVLCGDALIDLDLTTAVKLHREKGAIATIITKTVPQELVSSYGVVVTDDNGKILTFQEKPAVEEALSTEINTGIYIFEPEVIDYIPSGQEYDLGGDLFPKLVDSGLPFYAVNMDFEWVDIGKVPDYWQAIRGVLSREIKNVQIPGIEVRPGVYTGINVAANWDNIEIEGPVYIGGMTRIEDGVKIIGPSMIGPSCLICQGAVVDNSVIFEYSRLGPGARLVDKLVFGRYCVDKTGAAIDVQAAALDWLITDARHAAVQYRQEYPSQREISKLLQPE.

Asp-118 contacts Mg(2+).

Belongs to the CugP-type UDP-glucose pyrophosphorylase family. Mg(2+) is required as a cofactor.

The catalysed reaction is alpha-D-glucose 1-phosphate + UTP + H(+) = UDP-alpha-D-glucose + diphosphate. Its function is as follows. Catalyzes the formation of UDP-glucose, from UTP and glucose 1-phosphate. Is highly specific since it cannot use other NTPs such as dTTP, CTP, ATP, and GTP, and other sugar-1P such as GlcNAc-1P, Gal-1P, and Man-1P, as substrates. Has probably a central and essential role as the substrate supplier for galactolipid synthesis; galactolipids are major constituents of the photosynthetic thylakoid membrane and important for photosynthetic activity. In Synechocystis sp. (strain ATCC 27184 / PCC 6803 / Kazusa), this protein is UTP--glucose-1-phosphate uridylyltransferase.